The sequence spans 476 residues: Transposase for transposon Tn5 (476 aa).

An interaction with DNA region spans residues 1-70 (MITSALHRAA…YRFIRNPNVS (70 aa)). Residues aspartate 97 and aspartate 188 each contribute to the Mg(2+) site. Interaction with DNA regions lie at residues 237 to 255 (YQIS…KRKN) and 319 to 348 (YTHR…EPDN). Residue glutamate 326 coordinates Mg(2+). An important for dimerization region spans residues 369-476 (SFTLPQALRA…KDLMAQGIKI (108 aa)).

This sequence belongs to the transposase 11 family. In terms of assembly, monomer. Homodimer of tnp (isoform 1), and heterodimer of tnp (isoform 1) and inh (isoform 2). Mg(2+) serves as cofactor.

Mediates transposition of transposon Tn5 by a 'cut and paste' mechanism. First, the monomeric transposase binds the 19 bp inverted DNA repeats flanking the transposon. Then, dimerization of the DNA-bound transposase creates a synaptic DNA complex. After nicking of the first DNA strand, excision of the transposon proceeds through a series of intermediates. The transposase then mediates the insertion of the transposon at a new site by strand transfer. The activity of the wild-type transposase is very low, and is further inhibited by dimerization with the transposase inhibitor (inh). The protein is Transposase for transposon Tn5 (tnpA) of Escherichia coli.